We begin with the raw amino-acid sequence, 403 residues long: Nucleoporin nup44 (403 aa).

Polar residues-rich tracts occupy residues Met-1–Pro-31 and Phe-67–Asn-124. A disordered region spans residues Met-1–Asn-124.

It localises to the cytoplasm. Its subcellular location is the nucleus. Functionally, functions as a component of the nuclear pore complex (NPC). NPC components, collectively referred to as nucleoporins (NUPs), can play the role of both NPC structural components and of docking or interaction partners for transiently associated nuclear transport factors. Active directional transport is assured by both, a Phe-Gly (FG) repeat affinity gradient for these transport factors across the NPC and a transport cofactor concentration gradient across the nuclear envelope. The chain is Nucleoporin nup44 (nup44) from Schizosaccharomyces pombe (strain 972 / ATCC 24843) (Fission yeast).